Here is a 79-residue protein sequence, read N- to C-terminus: Major outer membrane lipoprotein Lpp 3 (79 aa).

The N-terminal stretch at 1–21 (MNRTNKLILGAVVLGSALLAG) is a signal peptide. C22 is lipidated: N-palmitoyl cysteine. A lipid anchor (S-diacylglycerol cysteine) is attached at C22. Repeats lie at residues 25–35 (NAKIDQLSSDV) and 39–49 (SAKVDQLSNDV). Residues 28–76 (IDQLSSDVQTLSAKVDQLSNDVNAMRSDVQAAKDDAARANQRLDNKVLR) adopt a coiled-coil conformation. K79 carries the post-translational modification N6-murein peptidoglycan lysine.

This sequence belongs to the Lpp family. In terms of assembly, homotrimer.

The protein localises to the cell outer membrane. The protein resides in the secreted. It is found in the cell wall. Its function is as follows. A highly abundant outer membrane lipoprotein that controls the distance between the inner and outer membranes. The only protein known to be covalently linked to the peptidoglycan network (PGN). Also non-covalently binds the PGN. The link between the cell outer membrane and PGN contributes to maintenance of the structural and functional integrity of the cell envelope, and maintains the correct distance between the PGN and the outer membrane. This is Major outer membrane lipoprotein Lpp 3 from Salmonella paratyphi A (strain ATCC 9150 / SARB42).